Consider the following 260-residue polypeptide: Type III pantothenate kinase (260 aa).

Residue 6–13 (DAGNTRTK) coordinates ATP. Substrate is bound by residues tyrosine 88 and 95–98 (GVDR). Aspartate 97 acts as the Proton acceptor in catalysis. Serine 121 contacts ATP. Threonine 184 is a binding site for substrate.

Belongs to the type III pantothenate kinase family. Homodimer. Requires NH4(+) as cofactor. K(+) is required as a cofactor.

The protein resides in the cytoplasm. It catalyses the reaction (R)-pantothenate + ATP = (R)-4'-phosphopantothenate + ADP + H(+). Its pathway is cofactor biosynthesis; coenzyme A biosynthesis; CoA from (R)-pantothenate: step 1/5. Functionally, catalyzes the phosphorylation of pantothenate (Pan), the first step in CoA biosynthesis. This chain is Type III pantothenate kinase, found in Saccharophagus degradans (strain 2-40 / ATCC 43961 / DSM 17024).